Consider the following 226-residue polypeptide: UPF0111 protein HI_1603 (226 aa).

Belongs to the UPF0111 family.

This is UPF0111 protein HI_1603 from Haemophilus influenzae (strain ATCC 51907 / DSM 11121 / KW20 / Rd).